The following is a 221-amino-acid chain: Endo-1,4-beta-xylanase 1 (221 aa).

An N-terminal signal peptide occupies residues 1–22; sequence MKFFATIAALVVAAVAAPVAEA. Residues 29–221 enclose the GH11 domain; it reads PMLIERAGPG…GTGSASVTVS (193 aa). Catalysis depends on Glu-114, which acts as the Nucleophile. Residue Glu-208 is the Proton donor of the active site.

This sequence belongs to the glycosyl hydrolase 11 (cellulase G) family.

It localises to the secreted. The catalysed reaction is Endohydrolysis of (1-&gt;4)-beta-D-xylosidic linkages in xylans.. It participates in glycan degradation; xylan degradation. Endo-1,4-beta-xylanase involved in the hydrolysis of xylan, a major structural heterogeneous polysaccharide found in plant biomass representing the second most abundant polysaccharide in the biosphere, after cellulose. Hydrolyzes xylans from oat spelt and birchwood at similar rates, but it has no detectable activity toward Avicel or carboxymethyl cellulose. This chain is Endo-1,4-beta-xylanase 1 (xynI), found in Aureobasidium pullulans (Black yeast).